Consider the following 278-residue polypeptide: Ribosomal RNA small subunit methyltransferase A (278 aa).

Asn27, Leu29, Gly54, Glu75, Asp101, and Asn122 together coordinate S-adenosyl-L-methionine.

Belongs to the class I-like SAM-binding methyltransferase superfamily. rRNA adenine N(6)-methyltransferase family. RsmA subfamily.

It localises to the cytoplasm. It carries out the reaction adenosine(1518)/adenosine(1519) in 16S rRNA + 4 S-adenosyl-L-methionine = N(6)-dimethyladenosine(1518)/N(6)-dimethyladenosine(1519) in 16S rRNA + 4 S-adenosyl-L-homocysteine + 4 H(+). Its function is as follows. Specifically dimethylates two adjacent adenosines (A1518 and A1519) in the loop of a conserved hairpin near the 3'-end of 16S rRNA in the 30S particle. May play a critical role in biogenesis of 30S subunits. The protein is Ribosomal RNA small subunit methyltransferase A of Brucella anthropi (strain ATCC 49188 / DSM 6882 / CCUG 24695 / JCM 21032 / LMG 3331 / NBRC 15819 / NCTC 12168 / Alc 37) (Ochrobactrum anthropi).